A 556-amino-acid polypeptide reads, in one-letter code: Arginine--tRNA ligase 1 (556 aa).

The short motif at 132-142 (ANPTGDLHLGH) is the 'HIGH' region element.

It belongs to the class-I aminoacyl-tRNA synthetase family. In terms of assembly, monomer.

The protein resides in the cytoplasm. The enzyme catalyses tRNA(Arg) + L-arginine + ATP = L-arginyl-tRNA(Arg) + AMP + diphosphate. The chain is Arginine--tRNA ligase 1 from Bacillus anthracis.